The sequence spans 545 residues: CTP synthase (545 aa).

The interval 1–265 (MSRFIFVTGG…DAIVVEKFGL (265 aa)) is amidoligase domain. A CTP-binding site is contributed by Ser13. Ser13 serves as a coordination point for UTP. Residue 14-19 (SLGKGI) coordinates ATP. Tyr54 is a binding site for L-glutamine. ATP is bound at residue Asp71. Mg(2+)-binding residues include Asp71 and Glu139. Residues 146–148 (DIE), 186–191 (KTKPTQ), and Lys222 each bind CTP. Residues 186–191 (KTKPTQ) and Lys222 contribute to the UTP site. A Glutamine amidotransferase type-1 domain is found at 290–541 (TVGMVGKYIE…VAAALAEQKA (252 aa)). Gly351 contributes to the L-glutamine binding site. The active-site Nucleophile; for glutamine hydrolysis is the Cys378. Residues 379 to 382 (LGMQ), Glu402, and Arg469 each bind L-glutamine. Residues His514 and Glu516 contribute to the active site.

Belongs to the CTP synthase family. In terms of assembly, homotetramer.

It catalyses the reaction UTP + L-glutamine + ATP + H2O = CTP + L-glutamate + ADP + phosphate + 2 H(+). The enzyme catalyses L-glutamine + H2O = L-glutamate + NH4(+). The catalysed reaction is UTP + NH4(+) + ATP = CTP + ADP + phosphate + 2 H(+). The protein operates within pyrimidine metabolism; CTP biosynthesis via de novo pathway; CTP from UDP: step 2/2. Allosterically activated by GTP, when glutamine is the substrate; GTP has no effect on the reaction when ammonia is the substrate. The allosteric effector GTP functions by stabilizing the protein conformation that binds the tetrahedral intermediate(s) formed during glutamine hydrolysis. Inhibited by the product CTP, via allosteric rather than competitive inhibition. Its function is as follows. Catalyzes the ATP-dependent amination of UTP to CTP with either L-glutamine or ammonia as the source of nitrogen. Regulates intracellular CTP levels through interactions with the four ribonucleotide triphosphates. The sequence is that of CTP synthase from Alcanivorax borkumensis (strain ATCC 700651 / DSM 11573 / NCIMB 13689 / SK2).